A 276-amino-acid polypeptide reads, in one-letter code: 2,3,4,5-tetrahydropyridine-2,6-dicarboxylate N-succinyltransferase (276 aa).

Substrate contacts are provided by Arg108 and Asp145.

Belongs to the transferase hexapeptide repeat family. Homotrimer.

It is found in the cytoplasm. It carries out the reaction (S)-2,3,4,5-tetrahydrodipicolinate + succinyl-CoA + H2O = (S)-2-succinylamino-6-oxoheptanedioate + CoA. It functions in the pathway amino-acid biosynthesis; L-lysine biosynthesis via DAP pathway; LL-2,6-diaminopimelate from (S)-tetrahydrodipicolinate (succinylase route): step 1/3. The polypeptide is 2,3,4,5-tetrahydropyridine-2,6-dicarboxylate N-succinyltransferase (Caulobacter vibrioides (strain ATCC 19089 / CIP 103742 / CB 15) (Caulobacter crescentus)).